The primary structure comprises 128 residues: Probable soluble cytochrome b562 2 (128 aa).

Positions 1-22 are cleaved as a signal peptide; that stretch reads MGKTLMALITAALLSTSSLVMA. Residues Met-29 and His-124 each contribute to the heme b site.

This sequence belongs to the cytochrome b562 family. It depends on heme b as a cofactor.

It is found in the periplasm. Functionally, electron-transport protein of unknown function. The polypeptide is Probable soluble cytochrome b562 2 (cybC2) (Yersinia pestis).